Consider the following 120-residue polypeptide: Protein crumbs homolog 3 (120 aa).

An N-terminal signal peptide occupies residues 1-26 (MANPGLGLLLALGLPFLLARWGRAWG). Residues 27-59 (QIQTTSANENSTVLPSSTSSSSDGNLRPEAITA) lie on the Extracellular side of the membrane. The N-linked (GlcNAc...) asparagine glycan is linked to Asn36. A helical membrane pass occupies residues 60–80 (IIVVFSLLAALLLAVGLALLV). The Cytoplasmic segment spans residues 81 to 120 (RKLREKRQTEGTYRPSSEEQVGARVPPTPNLKLPPEERLI). The segment at 84–120 (REKRQTEGTYRPSSEEQVGARVPPTPNLKLPPEERLI) is interaction with EPB41L5. Residues 87–120 (RQTEGTYRPSSEEQVGARVPPTPNLKLPPEERLI) form a disordered region. The span at 90 to 99 (EGTYRPSSEE) shows a compositional bias: polar residues. The PDZ-binding signature appears at 117 to 120 (ERLI).

Component of a complex composed of CRB3, PALS1 and PATJ. Interacts (via C-terminus) with PALS1 (via PDZ domain). Interacts with PARD6A. Interacts (via intracellular domain) with EPB41L5. Interacts with WDR83. In terms of tissue distribution, preferentially expressed in epithelial tissues. Expressed at high levels in lung, kidney, and colon. Expressed at high levels in retina, colon and mammary glands. Moderately expressed in liver, spleen, pancreas and prostate. Moderately to weakly expressed in the placenta. Weakly expressed in skeletal muscle and small intestine.

The protein resides in the apical cell membrane. The protein localises to the cell junction. Its subcellular location is the tight junction. Its function is as follows. Involved in the establishment of cell polarity in mammalian epithelial cells. Regulates the morphogenesis of tight junctions. Involved in promoting phosphorylation and cytoplasmic retention of transcriptional coactivators YAP1 and WWTR1/TAZ which leads to suppression of TGFB1-dependent transcription of target genes such as CCN2/CTGF, SERPINE1/PAI1, SNAI1/SNAIL1 and SMAD7. The chain is Protein crumbs homolog 3 from Homo sapiens (Human).